Here is a 216-residue protein sequence, read N- to C-terminus: ATP-dependent Clp protease proteolytic subunit (216 aa).

S101 (nucleophile) is an active-site residue. The active site involves H126.

It belongs to the peptidase S14 family. Component of the chloroplastic Clp protease core complex.

The protein localises to the plastid. Its subcellular location is the chloroplast stroma. The catalysed reaction is Hydrolysis of proteins to small peptides in the presence of ATP and magnesium. alpha-casein is the usual test substrate. In the absence of ATP, only oligopeptides shorter than five residues are hydrolyzed (such as succinyl-Leu-Tyr-|-NHMec, and Leu-Tyr-Leu-|-Tyr-Trp, in which cleavage of the -Tyr-|-Leu- and -Tyr-|-Trp bonds also occurs).. Functionally, cleaves peptides in various proteins in a process that requires ATP hydrolysis. Has a chymotrypsin-like activity. Plays a major role in the degradation of misfolded proteins. The sequence is that of ATP-dependent Clp protease proteolytic subunit from Hordeum vulgare (Barley).